A 203-amino-acid chain; its full sequence is GTP cyclohydrolase-2 (203 aa).

R49–E53 contributes to the GTP binding site. 3 residues coordinate Zn(2+): C54, C65, and C67. GTP contacts are provided by residues Q70, E92–R94, and T114. D126 serves as the catalytic Proton acceptor. R128 acts as the Nucleophile in catalysis. T149 and K154 together coordinate GTP.

Belongs to the GTP cyclohydrolase II family. It depends on Zn(2+) as a cofactor.

The enzyme catalyses GTP + 4 H2O = 2,5-diamino-6-hydroxy-4-(5-phosphoribosylamino)-pyrimidine + formate + 2 phosphate + 3 H(+). The protein operates within cofactor biosynthesis; riboflavin biosynthesis; 5-amino-6-(D-ribitylamino)uracil from GTP: step 1/4. Catalyzes the conversion of GTP to 2,5-diamino-6-ribosylamino-4(3H)-pyrimidinone 5'-phosphate (DARP), formate and pyrophosphate. This chain is GTP cyclohydrolase-2, found in Shewanella sp. (strain MR-7).